A 452-amino-acid polypeptide reads, in one-letter code: AP-4 complex subunit mu-1 (452 aa).

In terms of domain architecture, MHD spans 184–451 (KNEVFLDVVE…LSHSDAYVIR (268 aa)).

The protein belongs to the adaptor complexes medium subunit family. As to quaternary structure, adaptor protein complex 4 (AP-4) is a heterotetramer composed of two large adaptins (epsilon-type subunit AP4E1 and beta-type subunit AP4B1), a medium adaptin (mu-type subunit AP4M1) and a small adaptin (sigma-type AP4S1). Interacts with tyrosine-based sorting signals on the cytoplasmic tail of cargo proteins such as APP, ATG9A, LAMP2 and NAGPA. Interacts with the C-terminal domain of GRID2. Interacts with GRIA1 and GRIA2; the interaction is indirect via CACNG3. Interacts with CACNG3; CACNG3 associates GRIA1 and GRIA2 with the adaptor protein complex 4 (AP-4) to target them to the somatodendritic compartment of neurons. Interacts with HOOK1 and HOOK2; the interactions are direct, mediate the interaction between FTS-Hook-FHIP (FHF) complex and AP-4 and the perinuclear distribution of AP-4.

It localises to the golgi apparatus. The protein resides in the trans-Golgi network membrane. The protein localises to the early endosome. In terms of biological role, component of the adaptor protein complex 4 (AP-4). Adaptor protein complexes are vesicle coat components involved both in vesicle formation and cargo selection. They control the vesicular transport of proteins in different trafficking pathways. AP-4 forms a non clathrin-associated coat on vesicles departing the trans-Golgi network (TGN) and may be involved in the targeting of proteins from the trans-Golgi network (TGN) to the endosomal-lysosomal system. It is also involved in protein sorting to the basolateral membrane in epithelial cells and the proper asymmetric localization of somatodendritic proteins in neurons. Within AP-4, the mu-type subunit AP4M1 is directly involved in the recognition and binding of tyrosine-based sorting signals found in the cytoplasmic part of cargos. The adaptor protein complex 4 (AP-4) may also recognize other types of sorting signal. The chain is AP-4 complex subunit mu-1 from Canis lupus familiaris (Dog).